The chain runs to 379 residues: Carbamoyl phosphate synthase small chain (379 aa).

Residues 1–188 (MSTPAILALA…ELGKGFTQPE (188 aa)) form a CPSase region. Residues S47, G240, and G242 each contribute to the L-glutamine site. In terms of domain architecture, Glutamine amidotransferase type-1 spans 192–379 (HVVAYDYGVK…FIELIEAAKK (188 aa)). C269 (nucleophile) is an active-site residue. Positions 270, 273, 311, 313, and 314 each coordinate L-glutamine. Residues H353 and E355 contribute to the active site.

The protein belongs to the CarA family. As to quaternary structure, composed of two chains; the small (or glutamine) chain promotes the hydrolysis of glutamine to ammonia, which is used by the large (or ammonia) chain to synthesize carbamoyl phosphate. Tetramer of heterodimers (alpha,beta)4.

It carries out the reaction hydrogencarbonate + L-glutamine + 2 ATP + H2O = carbamoyl phosphate + L-glutamate + 2 ADP + phosphate + 2 H(+). The enzyme catalyses L-glutamine + H2O = L-glutamate + NH4(+). The protein operates within amino-acid biosynthesis; L-arginine biosynthesis; carbamoyl phosphate from bicarbonate: step 1/1. It participates in pyrimidine metabolism; UMP biosynthesis via de novo pathway; (S)-dihydroorotate from bicarbonate: step 1/3. In terms of biological role, small subunit of the glutamine-dependent carbamoyl phosphate synthetase (CPSase). CPSase catalyzes the formation of carbamoyl phosphate from the ammonia moiety of glutamine, carbonate, and phosphate donated by ATP, constituting the first step of 2 biosynthetic pathways, one leading to arginine and/or urea and the other to pyrimidine nucleotides. The small subunit (glutamine amidotransferase) binds and cleaves glutamine to supply the large subunit with the substrate ammonia. The polypeptide is Carbamoyl phosphate synthase small chain (Acinetobacter baylyi (strain ATCC 33305 / BD413 / ADP1)).